We begin with the raw amino-acid sequence, 468 residues long: Sulfate adenylyltransferase subunit 1 (468 aa).

The 218-residue stretch at 22 to 239 folds into the tr-type G domain; sequence KELLRFLTCG…TVEIASDKNA (218 aa). The interval 31–38 is G1; sequence GSVDDGKS. Position 31–38 (31–38) interacts with GTP; that stretch reads GSVDDGKS. A G2 region spans residues 89 to 93; sequence GITID. The interval 110-113 is G3; the sequence is DTPG. GTP is bound by residues 110–114 and 165–168; these read DTPGH and NKMD. The interval 165–168 is G4; the sequence is NKMD. Positions 202–204 are G5; the sequence is SAL.

This sequence belongs to the TRAFAC class translation factor GTPase superfamily. Classic translation factor GTPase family. CysN/NodQ subfamily. Heterodimer composed of CysD, the smaller subunit, and CysN.

The enzyme catalyses sulfate + ATP + H(+) = adenosine 5'-phosphosulfate + diphosphate. It functions in the pathway sulfur metabolism; hydrogen sulfide biosynthesis; sulfite from sulfate: step 1/3. Its function is as follows. With CysD forms the ATP sulfurylase (ATPS) that catalyzes the adenylation of sulfate producing adenosine 5'-phosphosulfate (APS) and diphosphate, the first enzymatic step in sulfur assimilation pathway. APS synthesis involves the formation of a high-energy phosphoric-sulfuric acid anhydride bond driven by GTP hydrolysis by CysN coupled to ATP hydrolysis by CysD. The chain is Sulfate adenylyltransferase subunit 1 from Teredinibacter turnerae (strain ATCC 39867 / T7901).